Here is a 298-residue protein sequence, read N- to C-terminus: Oxygen-dependent coproporphyrinogen-III oxidase (298 aa).

Position 92 (Ser-92) interacts with substrate. Residues His-96 and His-106 each contribute to the a divalent metal cation site. Catalysis depends on His-106, which acts as the Proton donor. Position 108-110 (108-110 (NVR)) interacts with substrate. A divalent metal cation is bound by residues His-145 and His-175. The segment at 239-274 (YVEFNLVYDRGTLFGLQSGGRSESILMSLPPRVRWE) is important for dimerization. 257-259 (GGR) contacts substrate.

The protein belongs to the aerobic coproporphyrinogen-III oxidase family. As to quaternary structure, homodimer. A divalent metal cation serves as cofactor.

The protein resides in the cytoplasm. It catalyses the reaction coproporphyrinogen III + O2 + 2 H(+) = protoporphyrinogen IX + 2 CO2 + 2 H2O. Its pathway is porphyrin-containing compound metabolism; protoporphyrin-IX biosynthesis; protoporphyrinogen-IX from coproporphyrinogen-III (O2 route): step 1/1. Involved in the heme biosynthesis. Catalyzes the aerobic oxidative decarboxylation of propionate groups of rings A and B of coproporphyrinogen-III to yield the vinyl groups in protoporphyrinogen-IX. This chain is Oxygen-dependent coproporphyrinogen-III oxidase, found in Stenotrophomonas maltophilia (strain R551-3).